The primary structure comprises 1976 residues: Myosin-10 (1976 aa).

Arg-18 carries the omega-N-methylarginine modification. The Myosin N-terminal SH3-like domain occupies 31–81 (TAKKLVWIPSERHGFEAASIKEERGDEVMVELAENGKKAMVNKDDIQKMNP). Positions 85–783 (SKVEDMAELT…VLAHLEEERD (699 aa)) constitute a Myosin motor domain. An ATP-binding site is contributed by 178–185 (GESGAGKT). Leu-214 bears the Phosphoserine mark. Lys-442 is modified (N6-acetyllysine). Positions 661–683 (LTKLMATLRNTNPNFVRCIIPNH) are actin-binding. The region spanning 786-815 (ITDIIIFFQAVCRGYLARKAFAKKQQQLSA) is the IQ domain. The stretch at 845-1976 (LQVTRQEEEL…VNETQPPQSE (1132 aa)) forms a coiled coil. The disordered stretch occupies residues 1127 to 1147 (FESEKASRNKAEKQKRDLSEE). The span at 1129–1147 (SEKASRNKAEKQKRDLSEE) shows a compositional bias: basic and acidic residues. Ser-1145 is modified (phosphoserine). 3 positions are modified to N6-acetyllysine: Lys-1241, Lys-1301, and Lys-1645. 2 disordered regions span residues 1697–1728 (ASSERARRHAEQERDELADEITNSASGKSALL) and 1872–1976 (MEKA…PQSE). Residues 1698–1708 (SSERARRHAEQ) are compositionally biased toward basic and acidic residues. Arg-1930 is modified (omega-N-methylarginine). Phosphoserine is present on residues Ser-1935, Ser-1937, Ser-1938, and Ser-1939. Position 1940 is an omega-N-methylarginine (Arg-1940). A phosphoserine mark is found at Ser-1952 and Ser-1956. The residue at position 1960 (Thr-1960) is a Phosphothreonine. Over residues 1967 to 1976 (VNETQPPQSE) the composition is skewed to polar residues. Ser-1975 carries the post-translational modification Phosphoserine.

This sequence belongs to the TRAFAC class myosin-kinesin ATPase superfamily. Myosin family. In terms of assembly, myosin is a hexameric protein that consists of 2 heavy chain subunits (MHC), 2 alkali light chain subunits (MLC) and 2 regulatory light chain subunits (MLC-2). Interacts with PLEKHG6. Interacts with ECPAS. Interacts with KIF26B. Interacts with LARP6. Interacts with MCC. Interacts with CFAP95. As to quaternary structure, (Microbial infection) Interacts with herpes simplex virus 1/HHV-1 envelope glycoprotein B. Phosphorylated by ABL2. Isoform 1 is expressed in cerebellum and spinal chord. Isoform 2 is expressed in cerebrum and retina. Isoform 3 is expressed in the cerebrum and to a much lower extent in cerebellum.

The protein resides in the cell projection. It is found in the lamellipodium. The protein localises to the cell membrane. In terms of biological role, cellular myosin that appears to play a role in cytokinesis, cell shape, and specialized functions such as secretion and capping. Involved with LARP6 in the stabilization of type I collagen mRNAs for CO1A1 and CO1A2. During cell spreading, plays an important role in cytoskeleton reorganization, focal contacts formation (in the central part but not the margins of spreading cells), and lamellipodial extension; this function is mechanically antagonized by MYH9. Functionally, (Microbial infection) Acts as a receptor for herpes simplex virus 1/HHV-1 envelope glycoprotein B. In Homo sapiens (Human), this protein is Myosin-10 (MYH10).